Here is a 358-residue protein sequence, read N- to C-terminus: Alanine racemase (358 aa).

Catalysis depends on K35, which acts as the Proton acceptor; specific for D-alanine. K35 bears the N6-(pyridoxal phosphate)lysine mark. R130 provides a ligand contact to substrate. The active-site Proton acceptor; specific for L-alanine is the Y255. Position 303 (M303) interacts with substrate.

It belongs to the alanine racemase family. Pyridoxal 5'-phosphate serves as cofactor.

It catalyses the reaction L-alanine = D-alanine. It functions in the pathway amino-acid biosynthesis; D-alanine biosynthesis; D-alanine from L-alanine: step 1/1. Functionally, catalyzes the interconversion of L-alanine and D-alanine. May also act on other amino acids. The sequence is that of Alanine racemase (alr) from Shewanella putrefaciens (strain CN-32 / ATCC BAA-453).